A 209-amino-acid polypeptide reads, in one-letter code: Large ribosomal subunit protein uL3 (209 aa).

It belongs to the universal ribosomal protein uL3 family. In terms of assembly, part of the 50S ribosomal subunit. Forms a cluster with proteins L14 and L19.

In terms of biological role, one of the primary rRNA binding proteins, it binds directly near the 3'-end of the 23S rRNA, where it nucleates assembly of the 50S subunit. The sequence is that of Large ribosomal subunit protein uL3 from Carboxydothermus hydrogenoformans (strain ATCC BAA-161 / DSM 6008 / Z-2901).